The following is a 424-amino-acid chain: Histidine--tRNA ligase (424 aa).

This sequence belongs to the class-II aminoacyl-tRNA synthetase family. As to quaternary structure, homodimer.

It localises to the cytoplasm. It carries out the reaction tRNA(His) + L-histidine + ATP = L-histidyl-tRNA(His) + AMP + diphosphate + H(+). This is Histidine--tRNA ligase from Salmonella dublin (strain CT_02021853).